Consider the following 286-residue polypeptide: Nucleotide-binding protein PSPA7_5038 (286 aa).

8 to 15 (GRSGSGKS) provides a ligand contact to ATP. Position 60 to 63 (60 to 63 (DARN)) interacts with GTP.

It belongs to the RapZ-like family.

Functionally, displays ATPase and GTPase activities. The protein is Nucleotide-binding protein PSPA7_5038 of Pseudomonas paraeruginosa (strain DSM 24068 / PA7) (Pseudomonas aeruginosa (strain PA7)).